We begin with the raw amino-acid sequence, 264 residues long: Chanoclavine-I dehydrogenase easD (264 aa).

Positions 1 to 20 are cleaved as a signal peptide; that stretch reads MASVSSKIFAITGGASGIGA. Ile18, Asp66, Arg132, Tyr169, Lys173, and Thr204 together coordinate NADP(+). Catalysis depends on Tyr169, which acts as the Proton donor. The active-site Lowers pKa of active site Tyr is the Lys173.

This sequence belongs to the short-chain dehydrogenases/reductases (SDR) family. Homotetramer.

It catalyses the reaction chanoclavine-I + NAD(+) = chanoclavine-I aldehyde + NADH + H(+). It functions in the pathway alkaloid biosynthesis; ergot alkaloid biosynthesis. In terms of biological role, chanoclavine-I dehydrogenase; part of the gene cluster that mediates the biosynthesis of fungal ergot alkaloid. DmaW catalyzes the first step of ergot alkaloid biosynthesis by condensing dimethylallyl diphosphate (DMAP) and tryptophan to form 4-dimethylallyl-L-tryptophan. The second step is catalyzed by the methyltransferase easF that methylates 4-dimethylallyl-L-tryptophan in the presence of S-adenosyl-L-methionine, resulting in the formation of 4-dimethylallyl-L-abrine. The catalase easC and the FAD-dependent oxidoreductase easE then transform 4-dimethylallyl-L-abrine to chanoclavine-I which is further oxidized by easD in the presence of NAD(+), resulting in the formation of chanoclavine-I aldehyde. Chanoclavine-I aldehyde is the precursor of ergoamides and ergopeptines in Clavicipitaceae, and clavine-type alcaloids such as fumiclavine in Trichocomaceae. However, the metabolites downstream of chanoclavine-I aldehyde in Arthrodermataceae have not been identified yet. This chain is Chanoclavine-I dehydrogenase easD, found in Arthroderma otae (strain ATCC MYA-4605 / CBS 113480) (Microsporum canis).